A 406-amino-acid polypeptide reads, in one-letter code: Cysteine desulfurase (406 aa).

Lys-226 is modified (N6-(pyridoxal phosphate)lysine). The active-site Cysteine persulfide intermediate is the Cys-364.

Belongs to the class-V pyridoxal-phosphate-dependent aminotransferase family. Csd subfamily. As to quaternary structure, homodimer. Interacts with SufE and the SufBCD complex composed of SufB, SufC and SufD. The interaction with SufE is required to mediate the direct transfer of the sulfur atom from the S-sulfanylcysteine. The cofactor is pyridoxal 5'-phosphate.

The protein resides in the cytoplasm. The enzyme catalyses (sulfur carrier)-H + L-cysteine = (sulfur carrier)-SH + L-alanine. It carries out the reaction L-selenocysteine + AH2 = hydrogenselenide + L-alanine + A + H(+). The protein operates within cofactor biosynthesis; iron-sulfur cluster biosynthesis. Functionally, cysteine desulfurases mobilize the sulfur from L-cysteine to yield L-alanine, an essential step in sulfur metabolism for biosynthesis of a variety of sulfur-containing biomolecules. Component of the suf operon, which is activated and required under specific conditions such as oxidative stress and iron limitation. Acts as a potent selenocysteine lyase in vitro, that mobilizes selenium from L-selenocysteine. Selenocysteine lyase activity is however unsure in vivo. This chain is Cysteine desulfurase, found in Salmonella agona (strain SL483).